A 555-amino-acid chain; its full sequence is GPI-anchor transamidase component PIGS (555 aa).

Topologically, residues 2-18 are cytoplasmic; sequence AATGAAATDLEVVRGKR. Residues Arg15 and Arg18 each contribute to the a cardiolipin site. A helical membrane pass occupies residues 19–39; the sequence is AALFFATVVIVLGLPLWWKTT. Over 40–517 the chain is Lumenal; sequence ETYRAPLPYS…LHLLYFPDDQ (478 aa). Asn267 and Asn370 each carry an N-linked (GlcNAc...) asparagine glycan. Residues 518-532 form a helical membrane-spanning segment; the sequence is KFAIYIPLFLPMAVP. Over 533–555 the chain is Cytoplasmic; it reads ILLSLFKIFLETRKSWKKPEKTD.

Belongs to the PIGS family. Heteropentamer. Part of the GPI-anchor transamidase complex, consisting of PIGK, PIGT, PIGS, PIGU and GAA1.

It is found in the endoplasmic reticulum membrane. It participates in glycolipid biosynthesis; glycosylphosphatidylinositol-anchor biosynthesis. In terms of biological role, component of the glycosylphosphatidylinositol-anchor (GPI-anchor) transamidase (GPI-T) complex that catalyzes the formation of the linkage between a proprotein and a GPI-anchor and participates in GPI anchored protein biosynthesis. This chain is GPI-anchor transamidase component PIGS, found in Bos taurus (Bovine).